Reading from the N-terminus, the 239-residue chain is Increased recombination centers protein 22-1 (239 aa).

The signal sequence occupies residues M1–G19. Over Y20–L161 the chain is Lumenal. A helical transmembrane segment spans residues I162–I182. At W183–N239 the chain is on the cytoplasmic side. Over residues A201 to S213 the composition is skewed to low complexity. Residues A201–T222 form a disordered region.

The protein belongs to the IRC22 family.

The protein localises to the endoplasmic reticulum membrane. Is probably involved in a pathway contributing to genomic integrity. This is Increased recombination centers protein 22-1 (IRC22-1) from Candida albicans (strain WO-1) (Yeast).